The following is a 272-amino-acid chain: Prephenate dehydratase (272 aa).

The Prephenate dehydratase domain maps to 4 to 179 (AVIYTLPKGT…NKTRFILIGK (176 aa)). The ACT domain maps to 194–269 (IVFELKEDKP…TFINLLGKYP (76 aa)).

Homodimer.

It catalyses the reaction prephenate + H(+) = 3-phenylpyruvate + CO2 + H2O. Its pathway is amino-acid biosynthesis; L-phenylalanine biosynthesis; phenylpyruvate from prephenate: step 1/1. Inhibited by L-phenylalanine but not by L-tyrosine or L-tryptophan. The polypeptide is Prephenate dehydratase (pheA) (Methanocaldococcus jannaschii (strain ATCC 43067 / DSM 2661 / JAL-1 / JCM 10045 / NBRC 100440) (Methanococcus jannaschii)).